A 165-amino-acid polypeptide reads, in one-letter code: Phosphopantetheine adenylyltransferase (165 aa).

Belongs to the eukaryotic CoaD family.

It is found in the cytoplasm. The catalysed reaction is (R)-4'-phosphopantetheine + ATP + H(+) = 3'-dephospho-CoA + diphosphate. The protein operates within cofactor biosynthesis; coenzyme A biosynthesis. Reversibly transfers an adenylyl group from ATP to 4'-phosphopantetheine, yielding dephospho-CoA (dPCoA) and pyrophosphate. In Thermococcus kodakarensis (strain ATCC BAA-918 / JCM 12380 / KOD1) (Pyrococcus kodakaraensis (strain KOD1)), this protein is Phosphopantetheine adenylyltransferase.